We begin with the raw amino-acid sequence, 529 residues long: Peptide chain release factor 3 (529 aa).

One can recognise a tr-type G domain in the interval 10–278 (ARRRTFAIIS…NFVDLAPAPR (269 aa)). Residues 19 to 26 (SHPDAGKT), 87 to 91 (DTPGH), and 141 to 144 (NKLD) each bind GTP.

It belongs to the TRAFAC class translation factor GTPase superfamily. Classic translation factor GTPase family. PrfC subfamily.

Its subcellular location is the cytoplasm. Functionally, increases the formation of ribosomal termination complexes and stimulates activities of RF-1 and RF-2. It binds guanine nucleotides and has strong preference for UGA stop codons. It may interact directly with the ribosome. The stimulation of RF-1 and RF-2 is significantly reduced by GTP and GDP, but not by GMP. The sequence is that of Peptide chain release factor 3 from Nitratidesulfovibrio vulgaris (strain ATCC 29579 / DSM 644 / CCUG 34227 / NCIMB 8303 / VKM B-1760 / Hildenborough) (Desulfovibrio vulgaris).